A 480-amino-acid chain; its full sequence is Adenosylhomocysteinase (480 aa).

Substrate contacts are provided by T63, D142, and E203. 204–206 (TTT) is a binding site for NAD(+). Substrate contacts are provided by K233 and D237. NAD(+) contacts are provided by residues N238, 267–272 (GYGDVG), E290, N325, 346–348 (IGH), and N394.

This sequence belongs to the adenosylhomocysteinase family. NAD(+) serves as cofactor.

The protein resides in the cytoplasm. The enzyme catalyses S-adenosyl-L-homocysteine + H2O = L-homocysteine + adenosine. The protein operates within amino-acid biosynthesis; L-homocysteine biosynthesis; L-homocysteine from S-adenosyl-L-homocysteine: step 1/1. May play a key role in the regulation of the intracellular concentration of adenosylhomocysteine. This is Adenosylhomocysteinase from Xylella fastidiosa (strain Temecula1 / ATCC 700964).